Here is an 871-residue protein sequence, read N- to C-terminus: Leucine--tRNA ligase (871 aa).

The 'HIGH' region signature appears at 42 to 52 (PYPSGSLHMGH). A 'KMSKS' region motif is present at residues 634-638 (TMSKS). Lysine 637 lines the ATP pocket.

It belongs to the class-I aminoacyl-tRNA synthetase family.

The protein resides in the cytoplasm. The enzyme catalyses tRNA(Leu) + L-leucine + ATP = L-leucyl-tRNA(Leu) + AMP + diphosphate. The chain is Leucine--tRNA ligase from Nostoc punctiforme (strain ATCC 29133 / PCC 73102).